The sequence spans 487 residues: Betaine aldehyde dehydrogenase (487 aa).

Residues Ile-27 and Asp-93 each contribute to the K(+) site. Position 149–151 (149–151 (GAW)) interacts with NAD(+). Lys-161 serves as the catalytic Charge relay system. NAD(+) contacts are provided by residues 175–178 (KPSE) and 228–231 (SVPT). A K(+)-binding site is contributed by Leu-243. Glu-249 serves as the catalytic Proton acceptor. NAD(+)-binding residues include Gly-251, Cys-283, and Glu-384. Residue Cys-283 is the Nucleophile of the active site. Cys-283 bears the Cysteine sulfenic acid (-SOH) mark. Positions 454 and 457 each coordinate K(+). Glu-461 serves as the catalytic Charge relay system.

It belongs to the aldehyde dehydrogenase family. As to quaternary structure, dimer of dimers. K(+) is required as a cofactor.

It catalyses the reaction betaine aldehyde + NAD(+) + H2O = glycine betaine + NADH + 2 H(+). The protein operates within amine and polyamine biosynthesis; betaine biosynthesis via choline pathway; betaine from betaine aldehyde: step 1/1. In terms of biological role, involved in the biosynthesis of the osmoprotectant glycine betaine. Catalyzes the irreversible oxidation of betaine aldehyde to the corresponding acid. The chain is Betaine aldehyde dehydrogenase from Brucella abortus (strain S19).